The primary structure comprises 586 residues: Protein NRT1/ PTR FAMILY 5.3 (586 aa).

11 consecutive transmembrane segments (helical) span residues 77-97 (WVGT…AHFG), 100-120 (ITFV…TLSV), 141-161 (ASVI…IGTG), 189-209 (FFNW…TVLV), 217-237 (WAIG…IFLL), 334-354 (PVLF…TLFI), 370-390 (IPPA…IVIY), 408-428 (ITLL…MIIA), 449-469 (AVPI…MGLA), 492-512 (LGTS…SILL), and 538-558 (NYYM…LVVI).

Belongs to the major facilitator superfamily. Proton-dependent oligopeptide transporter (POT/PTR) (TC 2.A.17) family. Expressed in roots and siliques.

It localises to the membrane. In terms of biological role, peptide transporter. This is Protein NRT1/ PTR FAMILY 5.3 (NPF5.3) from Arabidopsis thaliana (Mouse-ear cress).